The chain runs to 473 residues: ATP synthase subunit beta, chloroplastic (473 aa).

ATP is bound at residue 172–179 (GGAGVGKT).

The protein belongs to the ATPase alpha/beta chains family. As to quaternary structure, F-type ATPases have 2 components, CF(1) - the catalytic core - and CF(0) - the membrane proton channel. CF(1) has five subunits: alpha(3), beta(3), gamma(1), delta(1), epsilon(1). CF(0) has four main subunits: a(1), b(1), b'(1) and c(9-12).

It is found in the plastid. The protein localises to the chloroplast thylakoid membrane. It carries out the reaction ATP + H2O + 4 H(+)(in) = ADP + phosphate + 5 H(+)(out). In terms of biological role, produces ATP from ADP in the presence of a proton gradient across the membrane. The catalytic sites are hosted primarily by the beta subunits. This Equisetum arvense (Field horsetail) protein is ATP synthase subunit beta, chloroplastic.